A 100-amino-acid polypeptide reads, in one-letter code: Putative ESAT-6-like protein Y (100 aa).

It belongs to the WXG100 family.

In Mycobacterium leprae (strain TN), this protein is Putative ESAT-6-like protein Y.